We begin with the raw amino-acid sequence, 508 residues long: Photosystem II CP47 reaction center protein (508 aa).

The next 6 helical transmembrane spans lie at 21 to 36 (AVHIMHTALVAGWAGS), 101 to 115 (ILFSGLCFLAAIWHW), 140 to 156 (GIHLFLSGLACFGFGAF), 203 to 218 (IAAGTLGILAGLFHLS), 237 to 252 (VLSSSIAAVFFAAFVV), and 457 to 472 (SFALLFFFGHIWHGAR).

Belongs to the PsbB/PsbC family. PsbB subfamily. PSII is composed of 1 copy each of membrane proteins PsbA, PsbB, PsbC, PsbD, PsbE, PsbF, PsbH, PsbI, PsbJ, PsbK, PsbL, PsbM, PsbT, PsbX, PsbY, PsbZ, Psb30/Ycf12, at least 3 peripheral proteins of the oxygen-evolving complex and a large number of cofactors. It forms dimeric complexes. Binds multiple chlorophylls. PSII binds additional chlorophylls, carotenoids and specific lipids. is required as a cofactor.

It is found in the plastid. The protein resides in the chloroplast thylakoid membrane. Functionally, one of the components of the core complex of photosystem II (PSII). It binds chlorophyll and helps catalyze the primary light-induced photochemical processes of PSII. PSII is a light-driven water:plastoquinone oxidoreductase, using light energy to abstract electrons from H(2)O, generating O(2) and a proton gradient subsequently used for ATP formation. This is Photosystem II CP47 reaction center protein from Oenothera biennis (German evening primrose).